Here is a 144-residue protein sequence, read N- to C-terminus: Granulocyte-macrophage colony-stimulating factor (144 aa).

A signal peptide spans 1–17; the sequence is MWLQGLLLLGTVACSIS. The O-linked (GalNAc...) serine glycan is linked to Ser24. Residue Thr27 is glycosylated (O-linked (GalNAc...) threonine). Residues Asn44 and Asn54 are each glycosylated (N-linked (GlcNAc...) asparagine). 2 cysteine pairs are disulfide-bonded: Cys71-Cys113 and Cys105-Cys138.

The protein belongs to the GM-CSF family. Monomer. The signaling GM-CSF receptor complex is a dodecamer of two head-to-head hexamers of two alpha, two beta, and two ligand subunits.

It is found in the secreted. Its function is as follows. Cytokine that stimulates the growth and differentiation of hematopoietic precursor cells from various lineages, including granulocytes, macrophages, eosinophils and erythrocytes. The polypeptide is Granulocyte-macrophage colony-stimulating factor (CSF2) (Chlorocebus aethiops (Green monkey)).